Here is a 754-residue protein sequence, read N- to C-terminus: uncharacterized protein (754 aa).

Positions 1–110 are disordered; it reads MNKGQNQVVP…RNMLGSLQKT (110 aa). Polar residues predominate over residues 15–25; the sequence is FGGQNPPQLSS. The span at 26-35 shows a compositional bias: low complexity; sequence IPPIVNPVVV. Residues 36–46 show a composition bias toward polar residues; it reads QNRTSPGTPFI. Residues 49-60 show a composition bias toward basic and acidic residues; it reads KAKEIYNRRQQE. Over residues 62–72 the composition is skewed to acidic residues; that stretch reads ISSDSEEEESP. A compositionally biased stretch (basic and acidic residues) spans 76–93; that stretch reads AKSKYSRDSRDSRDTRDS.

It is found in the virion. This is an uncharacterized protein from Acanthamoeba polyphaga mimivirus (APMV).